The chain runs to 209 residues: Protein GET1 (209 aa).

The Lumenal segment spans residues 1–3 (MSL). A helical transmembrane segment spans residues 4-23 (LLVIFLLELVVQLVNTIGAK). The Cytoplasmic segment spans residues 24–110 (TINNLLWRFY…SFSRKLTIYR (87 aa)). Positions 74–101 (WARLQRKHDKLMDELEKKKSQLDAHRTS) form a coiled coil. Residues 111–131 (WILTRGMQWFLCFWFSSQPMF) traverse the membrane as a helical segment. The Lumenal portion of the chain corresponds to 132-155 (WLPYGWFPYWVEWLVSFPNAPMGS). A helical transmembrane segment spans residues 156–172 (VSIVVWQSACSGVLALV). The Cytoplasmic segment spans residues 173-209 (IEAVMAVVRYTGGTGMQKQRQPVPAAGGAPGTSKKDL). The segment at 188–209 (MQKQRQPVPAAGGAPGTSKKDL) is disordered.

Belongs to the WRB/GET1 family. In terms of assembly, interacts with GET3.

The protein resides in the endoplasmic reticulum membrane. Required for the post-translational delivery of tail-anchored (TA) proteins to the endoplasmic reticulum. Acts as a membrane receptor for soluble GET3, which recognizes and selectively binds the transmembrane domain of TA proteins in the cytosol. This Chaetomium thermophilum (strain DSM 1495 / CBS 144.50 / IMI 039719) (Thermochaetoides thermophila) protein is Protein GET1.